We begin with the raw amino-acid sequence, 206 residues long: LexA repressor (206 aa).

The segment at residues 28–48 is a DNA-binding region (H-T-H motif); that stretch reads RAEIATRLGFKSANAAEEHLK. Catalysis depends on for autocatalytic cleavage activity residues serine 123 and lysine 160.

This sequence belongs to the peptidase S24 family. Homodimer.

It carries out the reaction Hydrolysis of Ala-|-Gly bond in repressor LexA.. Functionally, represses a number of genes involved in the response to DNA damage (SOS response), including recA and lexA. In the presence of single-stranded DNA, RecA interacts with LexA causing an autocatalytic cleavage which disrupts the DNA-binding part of LexA, leading to derepression of the SOS regulon and eventually DNA repair. This Shewanella sp. (strain MR-4) protein is LexA repressor.